Reading from the N-terminus, the 321-residue chain is MSQLYDITIVGGGPVGLFAAFYAHLRQAKVQIIDSLPQLGGQPAILYPEKEILDVPGFPNLTGEELTNRLIEQLNGFDTPIHLNETVLEIDKQEEFAITTSKGSHLTKTVIIAMGGGAFKPRPLELEGVEGYENIHYHVSNIQQYAGKKVTILGGGDSAVDWALAFEKIAPTTLVHRRDNFRALEHSVQALQESSVTIKTPFAPSQLLGNGKTLDKLEITKVKSDETETIDLDHLFVNYGFKSSVGNLKNWGLDLNRHKIIVNSKQESSQAGIYAIGDCCYYDGKIDLIATGLGEAPTAVNNAINYIDPEQKVQPKHSTSL.

Positions 34, 42, 47, 87, 119, 278, and 319 each coordinate FAD.

The protein belongs to the ferredoxin--NADP reductase type 2 family. In terms of assembly, homodimer. The cofactor is FAD.

It carries out the reaction 2 reduced [2Fe-2S]-[ferredoxin] + NADP(+) + H(+) = 2 oxidized [2Fe-2S]-[ferredoxin] + NADPH. This Streptococcus pneumoniae serotype 4 (strain ATCC BAA-334 / TIGR4) protein is Ferredoxin--NADP reductase.